Reading from the N-terminus, the 127-residue chain is Glycine cleavage system H protein (127 aa).

The region spanning 24–106 (TVTVGITDHA…FEGAWIAKIK (83 aa)) is the Lipoyl-binding domain. Position 65 is an N6-lipoyllysine (K65).

Belongs to the GcvH family. As to quaternary structure, the glycine cleavage system is composed of four proteins: P, T, L and H. (R)-lipoate is required as a cofactor.

The glycine cleavage system catalyzes the degradation of glycine. The H protein shuttles the methylamine group of glycine from the P protein to the T protein. This Marinomonas sp. (strain MWYL1) protein is Glycine cleavage system H protein.